A 329-amino-acid polypeptide reads, in one-letter code: GTP 3',8-cyclase (329 aa).

Residues 8 to 234 (AFARKFYYLR…QLRQRSDGPA (227 aa)) enclose the Radical SAM core domain. Arginine 17 is a binding site for GTP. [4Fe-4S] cluster-binding residues include cysteine 24 and cysteine 28. Position 30 (tyrosine 30) interacts with S-adenosyl-L-methionine. A [4Fe-4S] cluster-binding site is contributed by cysteine 31. Arginine 68 serves as a coordination point for GTP. Glycine 72 is an S-adenosyl-L-methionine binding site. GTP is bound at residue threonine 99. An S-adenosyl-L-methionine-binding site is contributed by serine 123. Lysine 160 contacts GTP. Methionine 194 is a binding site for S-adenosyl-L-methionine. [4Fe-4S] cluster contacts are provided by cysteine 257 and cysteine 260. 262–264 (RLR) provides a ligand contact to GTP. Residue cysteine 274 participates in [4Fe-4S] cluster binding.

Belongs to the radical SAM superfamily. MoaA family. Monomer and homodimer. It depends on [4Fe-4S] cluster as a cofactor.

The catalysed reaction is GTP + AH2 + S-adenosyl-L-methionine = (8S)-3',8-cyclo-7,8-dihydroguanosine 5'-triphosphate + 5'-deoxyadenosine + L-methionine + A + H(+). The protein operates within cofactor biosynthesis; molybdopterin biosynthesis. Its function is as follows. Catalyzes the cyclization of GTP to (8S)-3',8-cyclo-7,8-dihydroguanosine 5'-triphosphate. In Shigella sonnei (strain Ss046), this protein is GTP 3',8-cyclase.